Consider the following 829-residue polypeptide: Transcription activator GutR (829 aa).

The H-T-H motif DNA-binding region spans 42–61; the sequence is IDKIALQLGVSPNTIKSWIG. Residue 200 to 207 coordinates ATP; sequence GWAGMGKT. TPR repeat units follow at residues 697–730, 736–769, and 775–808; these read HRVLLVRGDLSFARGYHVEAIQLYEAANEISSTY, IEAYFNLGVAYVKCDQFEKAEEAFEQMLYDKHNA, and IYYHYGMAQLLYRKGEKTKAVESNQKAIRLIDSW.

Activator of the glucitol dehydrogenase gene (gutB). The chain is Transcription activator GutR (gutR) from Bacillus subtilis (strain 168).